The chain runs to 561 residues: Potassium-transporting ATPase potassium-binding subunit (561 aa).

Transmembrane regions (helical) follow at residues 5–25 (LAAG…YVPV), 60–80 (YGYA…LYAL), 86–106 (VLPL…NTAV), 131–151 (GLAV…VALI), 177–197 (ILLP…VIQS), 247–267 (PTPV…VSLT), 281–301 (LTLL…TLAA), 324–344 (FGIP…TGAV), 376–396 (GLYG…LLVG), 415–435 (ALSV…TVIL), 488–508 (ALGL…LALA), and 537–557 (GTVV…GPIA).

Belongs to the KdpA family. In terms of assembly, the system is composed of three essential subunits: KdpA, KdpB and KdpC.

Its subcellular location is the cell membrane. Its function is as follows. Part of the high-affinity ATP-driven potassium transport (or Kdp) system, which catalyzes the hydrolysis of ATP coupled with the electrogenic transport of potassium into the cytoplasm. This subunit binds the extracellular potassium ions and delivers the ions to the membrane domain of KdpB through an intramembrane tunnel. The chain is Potassium-transporting ATPase potassium-binding subunit from Rhodococcus opacus (strain B4).